Here is a 118-residue protein sequence, read N- to C-terminus: Large ribosomal subunit protein uL18 (118 aa).

Positions 1–24 (MISKPDKNKIRQKRHRRVRGKLSG) are disordered. Residues 10-20 (IRQKRHRRVRG) are compositionally biased toward basic residues.

The protein belongs to the universal ribosomal protein uL18 family. As to quaternary structure, part of the 50S ribosomal subunit; part of the 5S rRNA/L5/L18/L25 subcomplex. Contacts the 5S and 23S rRNAs.

In terms of biological role, this is one of the proteins that bind and probably mediate the attachment of the 5S RNA into the large ribosomal subunit, where it forms part of the central protuberance. This chain is Large ribosomal subunit protein uL18, found in Streptococcus mutans serotype c (strain ATCC 700610 / UA159).